Here is a 789-residue protein sequence, read N- to C-terminus: E3 UFM1-protein ligase 1 (789 aa).

The required for E3 UFM1-protein ligase activity stretch occupies residues 2-212 (AADWEEIRRL…VSNLITRYGF (211 aa)). Disordered regions lie at residues 407–470 (LENS…TGRN) and 743–763 (SKKAEQEDDNKTEEEEGADTI). Positions 444–453 (KIKKTKKKGR) are enriched in basic residues. Over residues 748 to 760 (QEDDNKTEEEEGA) the composition is skewed to acidic residues.

This sequence belongs to the UFL1 family. As to quaternary structure, catalytic component of the UFM1 ribosome E3 ligase (UREL) complex. Interacts with E2-like enzyme UFC1.

Its subcellular location is the endoplasmic reticulum membrane. It is found in the cytoplasm. The protein resides in the cytosol. It localises to the nucleus. The protein localises to the chromosome. E3 protein ligase that mediates ufmylation, the covalent attachment of the ubiquitin-like modifier UFM1 to lysine residues on target proteins, and which plays a key role in various processes, such as ribosome recycling, response to DNA damage, interferon response or reticulophagy (also called ER-phagy). As part of the UREL complex, plays a key role in ribosome recycling by catalyzing mono-ufmylation of RPL26/uL24 subunit of the 60S ribosome. Ufmylation of RPL26/uL24 occurs on free 60S ribosomes following ribosome dissociation: it weakens the junction between post-termination 60S subunits and SEC61 translocons, promoting release and recycling of the large ribosomal subunit from the endoplasmic reticulum membrane. Ufmylation of RPL26/uL24 and subsequent 60S ribosome recycling either take place after normal termination of translation or after ribosome stalling during cotranslational translocation at the endoplasmic reticulum. Involved in reticulophagy in response to endoplasmic reticulum stress by mediating ufmylation of proteins such as CYB5R3 and RPN1, thereby promoting lysosomal degradation of ufmylated proteins. Ufmylation in response to endoplasmic reticulum stress is essential for processes such as hematopoiesis, blood vessel morphogenesis or inflammatory response. The protein is E3 UFM1-protein ligase 1 of Gallus gallus (Chicken).